A 634-amino-acid chain; its full sequence is Glutathione S-transferase C-terminal domain-containing protein (634 aa).

Residues Leu-131–Ala-333 form the GST C-terminal domain. Residues Arg-189–Ala-233 are disordered. Positions Gln-204–Lys-226 are enriched in low complexity.

This sequence belongs to the GSTCD family.

It is found in the cytoplasm. The protein is Glutathione S-transferase C-terminal domain-containing protein (Gstcd) of Mus musculus (Mouse).